Reading from the N-terminus, the 444-residue chain is Pre-mRNA-splicing factor cwc25 (444 aa).

Disordered regions lie at residues 1 to 27 (MGSG…QKAE), 168 to 385 (LASM…TDLD), and 397 to 425 (EAER…GFMS). Residues 19 to 65 (NVAATQKAEAEAIAERKKLQQRLQEIEEERRKEEIQKALEAAGGKRK) are a coiled coil. A compositionally biased stretch (basic residues) spans 186 to 199 (QRRHKHRSHHHRSD). Composition is skewed to basic and acidic residues over residues 200 to 220 (RHRD…DRDR) and 228 to 281 (DSRD…DDRS). Residues 282–293 (RRHRFPQGRSRS) are compositionally biased toward basic residues. Composition is skewed to basic and acidic residues over residues 305–344 (RREY…EQPK), 360–372 (DGDH…ERAK), and 397–410 (EAER…EKAR). A coiled-coil region spans residues 364-417 (KNAEEERAKKLAAMQAAATDLDKAREERLKALAEAERAEREADEKARQQNKKFR).

Belongs to the CWC25 family. Associated with the spliceosome.

The protein localises to the nucleus. Functionally, involved in pre-mRNA splicing. In Neurospora crassa (strain ATCC 24698 / 74-OR23-1A / CBS 708.71 / DSM 1257 / FGSC 987), this protein is Pre-mRNA-splicing factor cwc25 (msp-6).